The primary structure comprises 161 residues: 3-isopropylmalate dehydratase small subunit (161 aa).

This sequence belongs to the LeuD family. LeuD type 2 subfamily. Heterodimer of LeuC and LeuD.

The catalysed reaction is (2R,3S)-3-isopropylmalate = (2S)-2-isopropylmalate. It participates in amino-acid biosynthesis; L-leucine biosynthesis; L-leucine from 3-methyl-2-oxobutanoate: step 2/4. Catalyzes the isomerization between 2-isopropylmalate and 3-isopropylmalate, via the formation of 2-isopropylmaleate. This chain is 3-isopropylmalate dehydratase small subunit, found in Pyrobaculum islandicum (strain DSM 4184 / JCM 9189 / GEO3).